Consider the following 633-residue polypeptide: Carbon catabolite-derepressing protein kinase (633 aa).

Low complexity predominate over residues 1–16; it reads MSSNNNTNTAPANANS. Residues 1–46 are disordered; sequence MSSNNNTNTAPANANSSHHHHHHHHHHHHHGHGGSNSTLNNPKSSL. The segment covering 17-32 has biased composition (basic residues); sequence SHHHHHHHHHHHHHGH. Positions 55-306 constitute a Protein kinase domain; it reads YQIVKTLGEG…IHEIMQDDWF (252 aa). Residues 61 to 69 and lysine 84 each bind ATP; that span reads LGEGSFGKV. Catalysis depends on aspartate 177, which acts as the Proton acceptor. Threonine 210 is subject to Phosphothreonine; by autocatalysis. The tract at residues 313–392 is auto-inhibitory domain (AID); the sequence is YLLPPDLKPH…YMLIKENKSL (80 aa). Positions 317-345 are disordered; sequence PDLKPHPEEENENNDSKKDGSSPDNDEID. The span at 319-337 shows a compositional bias: basic and acidic residues; the sequence is LKPHPEEENENNDSKKDGS. Residues 348 to 389 enclose the UBA domain; the sequence is LVNILSSTMGYEKDEIYESLESSEDTPAFNEIRDAYMLIKEN. The tract at residues 409–434 is disordered; the sequence is FLSQSPPTFQQQSKSHQKSQVDHETA. The residue at position 413 (serine 413) is a Phosphoserine. Lysine 461 participates in a covalent cross-link: Glycyl lysine isopeptide (Lys-Gly) (interchain with G-Cter in ubiquitin). Serine 487 is subject to Phosphoserine. Residue lysine 549 forms a Glycyl lysine isopeptide (Lys-Gly) (interchain with G-Cter in SUMO) linkage. At serine 632 the chain carries Phosphoserine.

This sequence belongs to the protein kinase superfamily. CAMK Ser/Thr protein kinase family. SNF1 subfamily. Component of the AMP-activated protein kinase complex also known as the SNF1 kinase complex (Snf1c), a heterotrimeric complex composed of an alpha subunit (SNF1), a regulatory subunit beta (GAL83 and substoichiometric alternate beta subunits SIP1 and SIP2), and a regulatory subunit gamma (SNF4). Interacts with the transcriptional activator SIP4. Interacts with SAK1. Interacts with CTK1: Interacts with adenylate cyclase CYR1. Post-translationally, phosphorylation at Thr-210 in response to glucose limitation leads to activation of kinase activity. ADP, but not AMP, protects the enzyme from dephosphorylation at Thr-210 by GLC7. Sumoylation by the SUMO (E3) ligase MMS21 leads to inhibition by interaction of SUMO attached to Lys-549 with a SUMO-interacting sequence motif located near the active site of SNF1, and by targeting SNF1 for glucose-induced destruction via the SLX5-SLX8 (SUMO-directed) ubiquitin ligase.

The protein resides in the cytoplasm. The protein localises to the nucleus. It localises to the nucleus membrane. It catalyses the reaction L-seryl-[protein] + ATP = O-phospho-L-seryl-[protein] + ADP + H(+). It carries out the reaction L-threonyl-[protein] + ATP = O-phospho-L-threonyl-[protein] + ADP + H(+). Its activity is regulated as follows. The kinase activity is positively regulated by SNF4 via sequestration of the SNF1 auto-inhibitory domain (AID). In terms of biological role, serine/threonine protein kinase essential for release from glucose repression. Catalytic subunit of the AMP-activated protein kinase complex also known as the SNF1 kinase complex (Snf1c), a central regulator of cellular energy homeostasis, which, in response to a fall in intracellular ATP levels, activates energy-producing pathways and inhibits energy-consuming processes. The complex phosphorylates histone H3 to form H3S10ph, which promotes H3K14ac formation, leading to transcriptional activation through TBP recruitment to the promoters. The complex also negatively regulates the HOG1 MAPK pathway in ER stress response including unfolded protein response (UPR). Under nutrient/energy depletion, the complex phosphorylates and activates PAS kinase PSK1 which in turn activates PBS1, leading to the inhibition of the TORC1 signaling pathway. SNF1 also interacts and phosphorylates adenylate cyclase CYR1 and negatively regulates the protein kinase A signaling pathway. Also phosphorylates and regulates the transcriptional activator CAT8. This is Carbon catabolite-derepressing protein kinase from Saccharomyces cerevisiae (strain ATCC 204508 / S288c) (Baker's yeast).